Here is a 428-residue protein sequence, read N- to C-terminus: Enolase (428 aa).

Gln-173 serves as a coordination point for (2R)-2-phosphoglycerate. Glu-217 serves as the catalytic Proton donor. Mg(2+) is bound by residues Asp-253, Glu-294, and Asp-320. Residues Lys-345, Arg-374, Ser-375, and Lys-396 each coordinate (2R)-2-phosphoglycerate. Catalysis depends on Lys-345, which acts as the Proton acceptor.

This sequence belongs to the enolase family. Mg(2+) serves as cofactor.

The protein localises to the cytoplasm. It is found in the secreted. The protein resides in the cell surface. It catalyses the reaction (2R)-2-phosphoglycerate = phosphoenolpyruvate + H2O. Its pathway is carbohydrate degradation; glycolysis; pyruvate from D-glyceraldehyde 3-phosphate: step 4/5. Its function is as follows. Catalyzes the reversible conversion of 2-phosphoglycerate (2-PG) into phosphoenolpyruvate (PEP). It is essential for the degradation of carbohydrates via glycolysis. The protein is Enolase of Methanosarcina barkeri (strain Fusaro / DSM 804).